Here is a 389-residue protein sequence, read N- to C-terminus: Tryptophan 2,3-dioxygenase (389 aa).

Residues 60-64 (FIITH) and arginine 131 contribute to the substrate site. Histidine 316 is a binding site for heme. A substrate-binding site is contributed by threonine 331.

This sequence belongs to the tryptophan 2,3-dioxygenase family. In terms of assembly, homotetramer. Dimer of dimers. Heme serves as cofactor.

It carries out the reaction L-tryptophan + O2 = N-formyl-L-kynurenine. It participates in amino-acid degradation; L-tryptophan degradation via kynurenine pathway; L-kynurenine from L-tryptophan: step 1/2. Its pathway is pigment biosynthesis; ommochrome biosynthesis. In terms of biological role, heme-dependent dioxygenase that catalyzes the oxidative cleavage of the L-tryptophan (L-Trp) pyrrole ring and converts L-tryptophan to N-formyl-L-kynurenine. Catalyzes the oxidative cleavage of the indole moiety. In Mayetiola destructor (Hessian fly), this protein is Tryptophan 2,3-dioxygenase.